Consider the following 498-residue polypeptide: Swainsonine transporter swnT (498 aa).

Residues 1–10 (MSLRNDEQTE) are compositionally biased toward basic and acidic residues. Residues 1-21 (MSLRNDEQTEKGAVVGKVDSQ) are disordered. The next 5 helical transmembrane spans lie at 42–64 (LSAIGIGYGVTNTAVGLLLVLGT), 79–99 (LAMAAVGLATATTLSELISAI), 126–146 (AMISWIAAIAIGASGNLAVPV), 167–187 (FVVFQLINIVTCFGACFEYFL), and 193–213 (ALLLVNVLSVSAIIITLFATA). Residues Asn227 and Asn242 are each glycosylated (N-linked (GlcNAc...) asparagine). 6 consecutive transmembrane segments (helical) span residues 272–292 (LIWTIVIAFSSGLLMILAVLV), 316–336 (AAAIGLWVPVLFLVFASVWSI), 370–390 (PIWSLIGSAIGTALFGCLYLA), 398–418 (LIATGILLQYASYSIPTILVL), 436–456 (GFMANIVMLAWTLVALIFYCF), and 469–489 (YVSAVLILIAILITSLWFLYA).

The protein belongs to the amino acid-polyamine-organocation (APC) superfamily. Amino acid/choline transporter (ACT) (TC 2.A.3.4) family.

Its subcellular location is the membrane. In terms of biological role, transmembrane transporter; part of the gene cluster that mediates the biosynthesis of swainsonine, a cytotoxic fungal alkaloid and a potential cancer therapy drug. Does not mediate the secretion of SW and the exact role of swnT in SW biosynthesis remains to be determined. The sequence is that of Swainsonine transporter swnT from Arthroderma benhamiae (strain ATCC MYA-4681 / CBS 112371) (Trichophyton mentagrophytes).